The primary structure comprises 256 residues: Phosphomannomutase (256 aa).

Asp-12 (nucleophile) is an active-site residue. Asp-12 and Asp-14 together coordinate Mg(2+). Asp-14 functions as the Proton donor/acceptor in the catalytic mechanism. Positions 21, 123, 134, 141, 179, and 181 each coordinate alpha-D-mannose 1-phosphate. Asp-209 is a Mg(2+) binding site.

This sequence belongs to the eukaryotic PMM family. In terms of assembly, homodimer.

Its subcellular location is the cytoplasm. The enzyme catalyses alpha-D-mannose 1-phosphate = D-mannose 6-phosphate. It participates in nucleotide-sugar biosynthesis; GDP-alpha-D-mannose biosynthesis; alpha-D-mannose 1-phosphate from D-fructose 6-phosphate: step 2/2. Functionally, involved in the synthesis of the GDP-mannose and dolichol-phosphate-mannose required for a number of critical mannosyl transfer reactions. The sequence is that of Phosphomannomutase (SEC53) from Encephalitozoon cuniculi (strain GB-M1) (Microsporidian parasite).